The following is a 228-amino-acid chain: Extracellular protease inhibitor 10 (228 aa).

Positions 1–22 (MKSAFTLSLALVAVTATISAAA) are cleaved as a signal peptide. 3 consecutive Kazal-like domains span residues 23 to 72 (DDNC…ECAS), 90 to 127 (TSGTVGCPDMCLDVYDPVSDENGKEYSNQCYMEMAKCK), and 156 to 208 (GYQG…EGTL). Asparagine 25 carries an N-linked (GlcNAc...) asparagine glycan. 3 cysteine pairs are disulfide-bonded: cysteine 26–cysteine 56, cysteine 30–cysteine 49, and cysteine 38–cysteine 70. A disordered region spans residues 69 to 92 (ECASTPASSATPSPVTSSTGSTSG). Over residues 71-92 (ASTPASSATPSPVTSSTGSTSG) the composition is skewed to low complexity. 4 disulfides stabilise this stretch: cysteine 96-cysteine 126, cysteine 100-cysteine 119, cysteine 162-cysteine 193, and cysteine 167-cysteine 186. Residue asparagine 199 is glycosylated (N-linked (GlcNAc...) asparagine).

In terms of assembly, interacts with host subtilisin-like protease P69B.

It is found in the secreted. In terms of biological role, secreted effector that interacts with and inhibits the pathogenesis-related P69B subtilisin-like serine protease of host tomato. Inhibition of host proteases by a pathogen extracellular protease inhibitor forms a specific type of defense-counterdefense mechanism between plants and microbial pathogens. The sequence is that of Extracellular protease inhibitor 10 from Phytophthora infestans (strain T30-4) (Potato late blight agent).